We begin with the raw amino-acid sequence, 352 residues long: Nicotinate-nucleotide--dimethylbenzimidazole phosphoribosyltransferase (352 aa).

The active-site Proton acceptor is the Glu-318.

Belongs to the CobT family.

The catalysed reaction is 5,6-dimethylbenzimidazole + nicotinate beta-D-ribonucleotide = alpha-ribazole 5'-phosphate + nicotinate + H(+). It participates in nucleoside biosynthesis; alpha-ribazole biosynthesis; alpha-ribazole from 5,6-dimethylbenzimidazole: step 1/2. Its function is as follows. Catalyzes the synthesis of alpha-ribazole-5'-phosphate from nicotinate mononucleotide (NAMN) and 5,6-dimethylbenzimidazole (DMB). This Dehalococcoides mccartyi (strain CBDB1) protein is Nicotinate-nucleotide--dimethylbenzimidazole phosphoribosyltransferase.